Reading from the N-terminus, the 611-residue chain is Glutamine--fructose-6-phosphate aminotransferase [isomerizing] (611 aa).

Catalysis depends on Cys-2, which acts as the Nucleophile; for GATase activity. The Glutamine amidotransferase type-2 domain occupies 2-219 (CGIVGGVSKT…DGDVAMLQRQ (218 aa)). SIS domains are found at residues 287 to 427 (AAAM…APGA) and 460 to 601 (WAAR…VDRP). Catalysis depends on Lys-606, which acts as the For Fru-6P isomerization activity.

In terms of assembly, homodimer.

It localises to the cytoplasm. The catalysed reaction is D-fructose 6-phosphate + L-glutamine = D-glucosamine 6-phosphate + L-glutamate. Catalyzes the first step in hexosamine metabolism, converting fructose-6P into glucosamine-6P using glutamine as a nitrogen source. The protein is Glutamine--fructose-6-phosphate aminotransferase [isomerizing] of Acidithiobacillus ferridurans.